A 164-amino-acid chain; its full sequence is Hydrogenase 2 maturation protease (164 aa).

Residues glutamate 16, aspartate 62, and histidine 93 each contribute to the Ni(2+) site.

Belongs to the peptidase A31 family. Ni(2+) serves as cofactor.

In terms of biological role, protease involved in the C-terminal processing of HybC, the large subunit of hydrogenase 2. Specifically cleaves off a 15 amino acid peptide from the C-terminus of the precursor of HybC. The protein is Hydrogenase 2 maturation protease (hybD) of Escherichia coli (strain K12).